Reading from the N-terminus, the 381-residue chain is MALDKRIWMHFDLLPFVFIIPLLVVSFLLIFESSAVLSLKQGVYYAIGFLLFWVVFFIPFRKLDRWLFALYWACVILLALVDFMGSSKLGAQRWLVIPFTSITLQPSEPVKIAILLLLAHLIKINPPPFKGYDWGMFLKLSFYICLPAALILKQPDLGTALIVLIMGFGILLIVGLRTRVWLPLLIALIVASPIAYHFLHDYQKKRIADFLSEKPNYHVMQSIIAIGSGGFLGKSKEACTQTKFKFLPIATSDFIFAYFVERFGFLGAILLFAIYIGLSLHLFFYLFESNSDWFLKIVALGISILIFVYSSVNIAMTLGLAPVVGIPLPLFSYGGSSFITFMILFAILENLLAFRYIFGNNSKPSFGNFGFLAQLVRALGS.

The next 10 helical transmembrane spans lie at 11–31, 40–60, 66–86, 102–122, 132–152, 156–176, 180–200, 263–283, 297–317, and 328–348; these read FDLL…LLIF, KQGV…FIPF, WLFA…FMGS, ITLQ…AHLI, YDWG…ALIL, DLGT…IVGL, VWLP…HFLH, FGFL…LHLF, IVAL…IAMT, and LPLF…FAIL.

Belongs to the SEDS family. MrdB/RodA subfamily.

The protein resides in the cell inner membrane. It carries out the reaction [GlcNAc-(1-&gt;4)-Mur2Ac(oyl-L-Ala-gamma-D-Glu-L-Lys-D-Ala-D-Ala)](n)-di-trans,octa-cis-undecaprenyl diphosphate + beta-D-GlcNAc-(1-&gt;4)-Mur2Ac(oyl-L-Ala-gamma-D-Glu-L-Lys-D-Ala-D-Ala)-di-trans,octa-cis-undecaprenyl diphosphate = [GlcNAc-(1-&gt;4)-Mur2Ac(oyl-L-Ala-gamma-D-Glu-L-Lys-D-Ala-D-Ala)](n+1)-di-trans,octa-cis-undecaprenyl diphosphate + di-trans,octa-cis-undecaprenyl diphosphate + H(+). It functions in the pathway cell wall biogenesis; peptidoglycan biosynthesis. Peptidoglycan polymerase that is essential for cell wall elongation. The sequence is that of Peptidoglycan glycosyltransferase MrdB from Helicobacter pylori (strain J99 / ATCC 700824) (Campylobacter pylori J99).